The chain runs to 1038 residues: Elongation factor 3 (1038 aa).

HEAT repeat units follow at residues glutamate 93–lysine 131, serine 133–tyrosine 170, arginine 174–asparagine 211, aspartate 213–alanine 249, methionine 255–aspartate 287, and glutamine 292–serine 331. ADP is bound at residue glutamate 406. ABC transporter domains lie at isoleucine 426–leucine 654 and isoleucine 680–threonine 995. Positions 716, 924, 927, and 953 each coordinate ADP. Residues arginine 1012 to glutamate 1038 are disordered. A compositionally biased stretch (basic and acidic residues) spans alanine 1021–tyrosine 1031.

The protein belongs to the ABC transporter superfamily. ABCF family. EF3 subfamily. Monomer.

The protein localises to the cytoplasm. It carries out the reaction ATP + H2O = ADP + phosphate + H(+). The protein operates within protein biosynthesis; polypeptide chain elongation. Functionally, ribosome-dependent ATPase that functions in cytoplasmic translation elongation. Required for the ATP-dependent release of deacylated tRNA from the ribosomal E-site during protein biosynthesis. Stimulates the eEF1A-dependent binding of aminoacyl-tRNA to the ribosomal A-site, which has reduced affinity for tRNA as long as the E-site is occupied. Assists translation termination by stimulating the release of nascent protein from the ribosome by release factors. This chain is Elongation factor 3, found in Phytophthora infestans (strain T30-4) (Potato late blight agent).